Here is a 530-residue protein sequence, read N- to C-terminus: Bifunctional purine biosynthesis protein PurH (530 aa).

Positions 1-148 (MNNARPIRRA…KNHKDVTIVV (148 aa)) constitute an MGS-like domain.

The protein belongs to the PurH family.

It carries out the reaction (6R)-10-formyltetrahydrofolate + 5-amino-1-(5-phospho-beta-D-ribosyl)imidazole-4-carboxamide = 5-formamido-1-(5-phospho-D-ribosyl)imidazole-4-carboxamide + (6S)-5,6,7,8-tetrahydrofolate. It catalyses the reaction IMP + H2O = 5-formamido-1-(5-phospho-D-ribosyl)imidazole-4-carboxamide. It participates in purine metabolism; IMP biosynthesis via de novo pathway; 5-formamido-1-(5-phospho-D-ribosyl)imidazole-4-carboxamide from 5-amino-1-(5-phospho-D-ribosyl)imidazole-4-carboxamide (10-formyl THF route): step 1/1. The protein operates within purine metabolism; IMP biosynthesis via de novo pathway; IMP from 5-formamido-1-(5-phospho-D-ribosyl)imidazole-4-carboxamide: step 1/1. The protein is Bifunctional purine biosynthesis protein PurH of Vibrio campbellii (strain ATCC BAA-1116).